Consider the following 613-residue polypeptide: Glucose-6-phosphate isomerase 1, chloroplastic (613 aa).

Residues 1 to 14 (MASLSGLYSSSPSL) show a composition bias toward low complexity. Residues 1–21 (MASLSGLYSSSPSLKPAKNHS) form a disordered region. Residues 1–48 (MASLSGLYSSSPSLKPAKNHSFKALPAQSRDSFSFPHTSKPTNLPLTL) constitute a chloroplast transit peptide. The active-site Proton donor is the Glu392. Active-site residues include His421 and Lys526. Phosphoserine is present on Ser595.

The protein belongs to the GPI family.

It localises to the plastid. It is found in the chloroplast stroma. It catalyses the reaction alpha-D-glucose 6-phosphate = beta-D-fructose 6-phosphate. The protein operates within carbohydrate degradation; glycolysis; D-glyceraldehyde 3-phosphate and glycerone phosphate from D-glucose: step 2/4. It participates in carbohydrate biosynthesis; gluconeogenesis. Inhibited by glycerol-3-P (G3P). Its function is as follows. Promotes the synthesis of starch in leaves. The polypeptide is Glucose-6-phosphate isomerase 1, chloroplastic (PGI1) (Arabidopsis thaliana (Mouse-ear cress)).